Reading from the N-terminus, the 189-residue chain is ATP synthase subunit delta (189 aa).

It belongs to the ATPase delta chain family. In terms of assembly, F-type ATPases have 2 components, F(1) - the catalytic core - and F(0) - the membrane proton channel. F(1) has five subunits: alpha(3), beta(3), gamma(1), delta(1), epsilon(1). F(0) has three main subunits: a(1), b(2) and c(10-14). The alpha and beta chains form an alternating ring which encloses part of the gamma chain. F(1) is attached to F(0) by a central stalk formed by the gamma and epsilon chains, while a peripheral stalk is formed by the delta and b chains.

The protein localises to the cell inner membrane. In terms of biological role, f(1)F(0) ATP synthase produces ATP from ADP in the presence of a proton or sodium gradient. F-type ATPases consist of two structural domains, F(1) containing the extramembraneous catalytic core and F(0) containing the membrane proton channel, linked together by a central stalk and a peripheral stalk. During catalysis, ATP synthesis in the catalytic domain of F(1) is coupled via a rotary mechanism of the central stalk subunits to proton translocation. This protein is part of the stalk that links CF(0) to CF(1). It either transmits conformational changes from CF(0) to CF(1) or is implicated in proton conduction. This Ehrlichia ruminantium (strain Gardel) protein is ATP synthase subunit delta.